Consider the following 342-residue polypeptide: 6-hydroxytryprostatin B O-methyltransferase (342 aa).

Residue Asp201 participates in S-adenosyl-L-methionine binding. His244 functions as the Proton acceptor in the catalytic mechanism.

The protein belongs to the class I-like SAM-binding methyltransferase superfamily. Cation-independent O-methyltransferase family. As to quaternary structure, homodimer.

It carries out the reaction 6-hydroxytryprostatin B + S-adenosyl-L-methionine = tryprostatin A + S-adenosyl-L-homocysteine + H(+). It participates in mycotoxin biosynthesis. Its function is as follows. 6-hydroxytryprostatin B O-methyltransferase; part of the gene cluster that mediates the biosynthesis of fumitremorgins, indole alkaloids that carry not only intriguing chemical structures, but also interesting biological and pharmacological activities. The biosynthesis of fumitremorgin-type alkaloids begins by condensation of the two amino acids L-tryptophan and L-proline to brevianamide F, catalyzed by the non-ribosomal peptide synthetase ftmA. Brevianamide F is then prenylated by the prenyltransferase ftmPT1/ftmB in the presence of dimethylallyl diphosphate, resulting in the formation of tryprostatin B. The three cytochrome P450 monooxygenases, ftmP450-1/ftmC, ftmP450-2/ftmE and ftmP450-3/FtmG, are responsible for the conversion of tryprostatin B to 6-hydroxytryprostatin B, tryprostatin A to fumitremorgin C and fumitremorgin C to 12,13-dihydroxyfumitremorgin C, respectively. The putative methyltransferase ftmMT/ftmD is expected for the conversion of 6-hydroxytryprostatin B to tryprostatin A. FtmPT2/FtmH catalyzes the prenylation of 12,13-dihydroxyfumitre-morgin C in the presence of dimethylallyl diphosphate, resulting in the formation of fumitremorgin B. Fumitremorgin B is further converted to verruculogen by ftmOx1/ftmF via the insertion of an endoperoxide bond between the two prenyl moieties. In some fungal species, verruculogen is further converted to fumitremorgin A, but the enzymes involved in this step have not been identified yet. This Aspergillus fumigatus (strain ATCC MYA-4609 / CBS 101355 / FGSC A1100 / Af293) (Neosartorya fumigata) protein is 6-hydroxytryprostatin B O-methyltransferase.